The sequence spans 293 residues: Probable porphobilinogen deaminase (293 aa).

The residue at position 233 (cysteine 233) is an S-(dipyrrolylmethanemethyl)cysteine.

This sequence belongs to the HMBS family. Dipyrromethane serves as cofactor.

The catalysed reaction is 4 porphobilinogen + H2O = hydroxymethylbilane + 4 NH4(+). It functions in the pathway porphyrin-containing compound metabolism; protoporphyrin-IX biosynthesis; coproporphyrinogen-III from 5-aminolevulinate: step 2/4. Functionally, tetrapolymerization of the monopyrrole PBG into the hydroxymethylbilane pre-uroporphyrinogen in several discrete steps. The sequence is that of Probable porphobilinogen deaminase from Saccharolobus islandicus (strain L.S.2.15 / Lassen #1) (Sulfolobus islandicus).